The chain runs to 207 residues: Ras-related protein Rab-5B (207 aa).

Gly2 is lipidated: N-myristoyl glycine. GTP contacts are provided by residues 41-49 (GDSGVGKSS), 60-66 (SEKHQVT), 90-94 (DTGGQ), 148-151 (NKKD), and 176-178 (SAK). The Effector region motif lies at 63 to 71 (HQVTIGAAF).

This sequence belongs to the small GTPase superfamily. Rab family. As to quaternary structure, interacts with CK1. May interact with ARF1. Myristoylation is required for cell membrane and food vacuole membrane localization. In terms of processing, may be palmitoylated on Cys-3. Post-translationally, lacks the C-terminal cysteine motifs subject to isoprenylation present in mammalian RAB5B homolog.

The protein resides in the cell membrane. The protein localises to the vacuole membrane. It is found in the vesicle. The catalysed reaction is GTP + H2O = GDP + phosphate + H(+). With respect to regulation, alternates between an inactive GDP-bound form and an active GTP-bound form. Activated by guanine nucleotide-exchange factors (GEFs) and inactivated by GTPase-activating proteins (GAPs). Small GTPase which regulates vesicle trafficking between organelles. May be involved in the trafficking of the N-myristoylated AK2 from the endoplasmic reticulum to the parasitophorous vacuole membrane. This is Ras-related protein Rab-5B from Plasmodium falciparum (isolate 3D7).